We begin with the raw amino-acid sequence, 205 residues long: Protein phosphatase inhibitor 2 (205 aa).

Disordered stretches follow at residues 1 to 46 (MAAS…KSQK) and 64 to 205 (GLMK…SQSS). Ala-2 carries the N-acetylalanine modification. Required for binding PPP1CC stretches follow at residues 12–17 (KGILKN) and 43–55 (KSQK…ILAT). Residues 17-26 (NKTSSTSSRV) show a composition bias toward polar residues. The span at 35 to 46 (SVDEELSKKSQK) shows a compositional bias: basic and acidic residues. Ser-44 carries the phosphoserine; by ATM modification. Thr-73 bears the Phosphothreonine; by GSK3 mark. Over residues 80–91 (GDDDDAYSDTET) the composition is skewed to acidic residues. At Ser-87 the chain carries Phosphoserine. Phosphothreonine occurs at positions 89, 92, and 96. A compositionally biased stretch (basic and acidic residues) spans 110 to 120 (SEPKYRIREQE). Phosphoserine occurs at positions 121, 122, 127, and 130. Over residues 121-130 (SSGEEDSDLS) the composition is skewed to acidic residues. Basic and acidic residues predominate over residues 131–143 (PEEREKKRQFEMK). A required for binding PPP1CC catalytic center, displacing metal ions and inhibition of PPP1CC catalytic activity region spans residues 147–150 (HYNE). Over residues 167-179 (DDEEDEEMSETAD) the composition is skewed to acidic residues. Polar residues predominate over residues 182 to 205 (SMNTEESNQGSTPSDQRQNKSQSS).

Belongs to the protein phosphatase inhibitor 2 family. In terms of assembly, heterodimer with PP1. Post-translationally, phosphorylation on Ser-44 by ATM activates PP1 by dissociating the PP1-PPP1R2 complex. Phosphorylation on Thr-73 by GSK3 activates PP1 by dissociating the PP1-PPP1R2 complex.

Its function is as follows. Inhibitor of protein-phosphatase 1. In Oryctolagus cuniculus (Rabbit), this protein is Protein phosphatase inhibitor 2 (PPP1R2).